The chain runs to 239 residues: 7-cyano-7-deazaguanine synthase (239 aa).

Residue 16 to 26 (FSGGQDSTTCL) participates in ATP binding. 4 residues coordinate Zn(2+): Cys204, Cys219, Cys222, and Cys225.

It belongs to the QueC family. Zn(2+) serves as cofactor.

It catalyses the reaction 7-carboxy-7-deazaguanine + NH4(+) + ATP = 7-cyano-7-deazaguanine + ADP + phosphate + H2O + H(+). It participates in purine metabolism; 7-cyano-7-deazaguanine biosynthesis. Its function is as follows. Catalyzes the ATP-dependent conversion of 7-carboxy-7-deazaguanine (CDG) to 7-cyano-7-deazaguanine (preQ(0)). This Polaromonas naphthalenivorans (strain CJ2) protein is 7-cyano-7-deazaguanine synthase.